The primary structure comprises 274 residues: MTTSAPEDRIDQVEQAITKSRRYQTVAPATVRRLARAALVAARGDVPDAVKRTKRGLHEIYGAFLPPSPPNYAALLRQLDSAVDAGDDEAVRAALRRAMSVHVSTRERLPHLAEFYQEIFRHVPQPNTLRDLACGLNPLAAPWMGLSDQTVYVASDIDARLIGFVDAALTRLGVAHRTSVVDLLEDRLDEPTDVTLLLKTLPCLETQRRGSGWEVIDIVNSPIIVVTFPTKSLGQRSKGMFQNYSQSFESQARERSCRIQRLEIGNELIYVIQK.

Residues phenylalanine 64, histidine 102–serine 104, arginine 108, alanine 133, aspartate 156, aspartate 182–leucine 183, leucine 198, and glutamine 207 each bind S-adenosyl-L-methionine.

Belongs to the methyltransferase superfamily. Aminoglycoside resistance family.

It catalyses the reaction guanosine(1405) in 16S rRNA + S-adenosyl-L-methionine = N(7)-methylguanosine(1405) in 16S rRNA + S-adenosyl-L-homocysteine. In terms of biological role, specifically methylates the N(7) position of guanine 1405 in 16S rRNA. Confers resistance to various aminoglycosides, including gentamicin and kanamycin. The chain is 16S rRNA (guanine(1405)-N(7))-methyltransferase (grm) from Micromonospora echinospora (Micromonospora purpurea).